Consider the following 77-residue polypeptide: SS18-like protein 2 (77 aa).

The short motif at 50 to 53 is the SH2-binding element; sequence YQHV.

It belongs to the SS18 family.

This chain is SS18-like protein 2 (SS18L2), found in Homo sapiens (Human).